Consider the following 351-residue polypeptide: c-di-GMP synthase (351 aa).

Belongs to the CD-NTase family. E05 subfamily.

It catalyses the reaction 2 GTP = 3',3'-c-di-GMP + 2 diphosphate. Cyclic nucleotide synthase (second messenger synthase) of a CBASS antivirus system. CBASS (cyclic oligonucleotide-based antiphage signaling system) provides immunity against bacteriophage. The CD-NTase protein synthesizes cyclic nucleotides in response to infection; these serve as specific second messenger signals. The signals activate a diverse range of effectors, leading to bacterial cell death and thus abortive phage infection. A type I-D(GG) CBASS system. Functionally, cyclic dinucleotide synthase that catalyzes the synthesis of c-di-GMP, has no activity with other NTP substrates. The sequence is that of c-di-GMP synthase (cdnE) from Capnocytophaga granulosa (strain ATCC 51502 / DSM 11449 / JCM 8566 / LMG 16022 / NCTC 12948 / B0611).